Here is a 247-residue protein sequence, read N- to C-terminus: Probable transcriptional regulatory protein lpp1249 (247 aa).

Belongs to the TACO1 family.

The protein resides in the cytoplasm. This is Probable transcriptional regulatory protein lpp1249 from Legionella pneumophila (strain Paris).